A 414-amino-acid chain; its full sequence is Ornithine aminotransferase (414 aa).

A disulfide bond links Cys154 and Cys163. Lys262 is modified (N6-(pyridoxal phosphate)lysine).

This sequence belongs to the class-III pyridoxal-phosphate-dependent aminotransferase family. Homodimer. Requires pyridoxal 5'-phosphate as cofactor. The disulfide bond between Cys-154 and Cys-163 is reduced by TRX1 which increases OAT catalytic activity.

The protein localises to the cytoplasm. The catalysed reaction is a 2-oxocarboxylate + L-ornithine = L-glutamate 5-semialdehyde + an L-alpha-amino acid. It catalyses the reaction L-ornithine + 2-oxoglutarate = L-glutamate 5-semialdehyde + L-glutamate. The protein operates within amino-acid biosynthesis; L-proline biosynthesis; L-glutamate 5-semialdehyde from L-ornithine: step 1/1. With respect to regulation, unlike for mammalian OATs, activity is increased by TRX1-mediated reduction of the disulfide bond between Cys-154 and Cys-163. Binding to TRX1 may also induce conformational changes that facilitate substrate binding. In terms of biological role, catalyzes the transamination of alpha-ketoglutarate with ornithine or N-acetylornithine and of glutamate-5-semialdehyde with glutamate and alanine. The protein is Ornithine aminotransferase of Plasmodium chabaudi chabaudi.